The sequence spans 220 residues: Recombination protein RecR (220 aa).

A C4-type zinc finger spans residues 57 to 72 (CPICFNITDAEKCDVC). A Toprim domain is found at 80-173 (RTICVVEEPG…AISRIAYGVP (94 aa)). The tract at residues 190-220 (LTGRQTVSKPQPPQRPGDEDGADGAAVPASR) is disordered.

The protein belongs to the RecR family.

May play a role in DNA repair. It seems to be involved in an RecBC-independent recombinational process of DNA repair. It may act with RecF and RecO. The sequence is that of Recombination protein RecR from Deinococcus radiodurans (strain ATCC 13939 / DSM 20539 / JCM 16871 / CCUG 27074 / LMG 4051 / NBRC 15346 / NCIMB 9279 / VKM B-1422 / R1).